The sequence spans 1325 residues: MKEPLDGECGKAVVPQQELLDKIKEEPDNAQEYGCVQQPKTQESKLKIGGVSSVNERPIAQQLNPGFQLSFASSGPSVLLPSVPAVAIKVFCSGCKKMLYKGQTAYHKTGSTQLFCSTRCITRHSSPACLPPPPKKTCTNCSKDILNPKDVITTRFENSYPSKDFCSQSCLSSYELKKKPVVTIYTKSISTKCSMCQKNADTRFEVKYQNVVHGLCSDACFSKFHSTNNLTMNCCENCGSYCYSSSGPCQSQKVFSSTSVTAYKQNSAQIPPYALGKSLRPSAEMIETTNDSGKTELFCSINCLSAYRVKTVTSSGVQVSCHSCKTSAIPQYHLAMSNGTIYSFCSSSCVVAFQNVFSKPKGTNSSAVPLSQGQVVVSPPSSRSAVSIGGGNTSAVSPSSIRGSAAASLQPLAEQSQQVALTHTVVKLKCQHCNHLFATKPELLFYKGKMFLFCGKNCSDEYKKKNKVVAMCDYCKLQKIIKETVRFSGVDKPFCSEVCKFLSARDFGERWGNYCKMCSYCSQTSPNLVENRLEGKLEEFCCEDCMSKFTVLFYQMAKCDGCKRQGKLSESIKWRGNIKHFCNLFCVLEFCHQQIMNDCLPQNKVNISKAKTAVTELPSARTDTTPVITSVMSLAKIPATLSTGNTNSVLKGAVTKEAAKIIQDESTQEDAMKFPSSQSSQPSRLLKNKGISCKPVTQTKATSCKPHTQHKECQTDLPMPNEKNDAELDSPPSKKKRLGFFQTYDTEYLKVGFIICPGSKESSPRPQCVICGEILSSENMKPANLSHHLKTKHSELENKPVDFFEQKSLEMECQNSSLKKCLLVEKSLVKASYLIAFQTAASKKPFSIAEELIKPYLVEMCSEVLGSSAGDKMKTIPLSNVTIQHRIDELSADIEDQLIQKVRESKWFALQIDESSEISNITLLLCYIRFIDYDCRDVKEELLFCIEMPTQITGFEIFELINKYIDSKSLNWKHCVGLCTDGAASMTGRYSGLKAKIQEVAMNTAAFTHCFIHRERLVAEKLSPCLHKILLQSAQILSFIKSNALNSRMLTILCEEMGSEHVSLPLHAEVRWISRGRMLKRLFELRHEIEIFLSQKHSDLAKYFHDEEWVGKLAYLSDIFSLINELNLSLQGTLTTFFNLCNKIDVFKRKLKMWLKRTQENDYDMFPSFSEFSNSSGLNMTDITRIIFEHLEGLSQVFSDCFPPEQDLRSGNLWIIHPFMNHQNNNLTDFEEEKLTELSSDLGLQALFKSVSVTQFWINAKTSYPELHERAMKFLLPFSTVYLCDAAFSALTESKQKNLLGSGPALRLAVTSLIPRIEKLVKEKE.

MYM-type zinc fingers lie at residues 113-151 (QLFCSTRCITRHSSPACLPPPPKKTCTNCSKDILNPKDV), 163-206 (KDFC…RFEV), 213-248 (HGLCSDACFSKFHSTNNLTMNCCENCGSYCYSSSGP), 296-334 (ELFCSINCLSAYRVKTVTSSGVQVSCHSCKTSAIPQYHL), 342-443 (YSFC…KPEL), 451-485 (FLFCGKNCSDEYKKKNKVVAMCDYCKLQKIIKETV), 492-531 (KPFCSEVCKFLSARDFGERWGNYCKMCSYCSQTSPNLVEN), and 538-572 (EEFCCEDCMSKFTVLFYQMAKCDGCKRQGKLSESI). Ser397 is subject to Phosphoserine. Positions 665–733 (ESTQEDAMKF…NDAELDSPPS (69 aa)) are disordered. The segment covering 695-706 (PVTQTKATSCKP) has biased composition (polar residues).

As to expression, expressed at high levels in heart, skeletal muscle, kidney and liver.

It is found in the nucleus. In terms of biological role, plays a role in the regulation of cell morphology and cytoskeletal organization. The sequence is that of Zinc finger MYM-type protein 6 (ZMYM6) from Homo sapiens (Human).